A 434-amino-acid chain; its full sequence is Probable G-protein coupled receptor 150 (434 aa).

Residues 1–3 lie on the Extracellular side of the membrane; sequence MED. Residues 4 to 24 traverse the membrane as a helical segment; sequence LFSPSILPPAPNISVPILLGW. Topologically, residues 25 to 43 are cytoplasmic; sequence GLNLTLGQGAPASGPPSRR. The chain crosses the membrane as a helical span at residues 44–64; the sequence is VRLVFLGVILVVAVAGNTTVL. Over 65–81 the chain is Extracellular; it reads CRLCGGGGPWAGPKRRK. The chain crosses the membrane as a helical span at residues 82–102; that stretch reads MDFLLVQLALADLYACGGTAL. The Cytoplasmic portion of the chain corresponds to 103-162; that stretch reads SQLAWELLGEPRAATGDLACRFLQLLQASGRGASAHLVVLIALERRRAVRLPHGRPLPAR. A helical membrane pass occupies residues 163–183; that stretch reads ALAALGWLLALLLALPPAFVV. Topologically, residues 184 to 237 are extracellular; the sequence is RGDSPSPLPPPPPPTSLQPGAPPAARAWPGERRCHGIFAPLPRWHLQVYAFYEA. The interval 188-210 is disordered; it reads PSPLPPPPPPTSLQPGAPPAARA. The span at 189-205 shows a compositional bias: pro residues; sequence SPLPPPPPPTSLQPGAP. Residues 238 to 258 form a helical membrane-spanning segment; it reads VAGFVAPVTVLGVACGHLLSV. Topologically, residues 259–293 are cytoplasmic; the sequence is WWRHRPQAPAAAAPWSASPGRAPAPSALPRAKVQS. A helical transmembrane segment spans residues 294-314; it reads LKMSLLLALLFVGCELPYFAA. The Extracellular segment spans residues 315 to 334; sequence RLAAAWSSGPAGDWEGEGLS. A helical transmembrane segment spans residues 335–355; sequence AALRVVAMANSALNPFVYLFF. Residues 356–434 lie on the Cytoplasmic side of the membrane; the sequence is QAGDCRLRRQ…PLPCSCESAF (79 aa). The segment covering 398-407 has biased composition (basic residues); the sequence is WPHPHYHHAR. The interval 398-434 is disordered; sequence WPHPHYHHARREPLDEGGLRPPPPRPRPLPCSCESAF. The segment covering 417 to 426 has biased composition (pro residues); sequence RPPPPRPRPL.

The protein belongs to the G-protein coupled receptor 1 family.

The protein localises to the cell membrane. In terms of biological role, orphan receptor. The protein is Probable G-protein coupled receptor 150 (GPR150) of Homo sapiens (Human).